Consider the following 149-residue polypeptide: Myosin, essential light chain (149 aa).

2 EF-hand domains span residues 7–42 and 79–114; these read SMIDEMKDGFPLFDNKGDGKIDGAQLGDVLRSFGLN and GSYEDFFEGLKLFDKEGTGLISGAELRHVLATLGEK.

As to quaternary structure, myosin is a hexamer of 2 heavy chains and 4 light chains (two regulatory light chains and two essential light chains).

The polypeptide is Myosin, essential light chain (Branchiostoma floridae (Florida lancelet)).